A 218-amino-acid chain; its full sequence is Serine/threonine-protein phosphatase 2 (218 aa).

Mn(2+)-binding residues include D22, H24, D51, and N77. The Proton donor role is filled by H78. H187 contributes to the Mn(2+) binding site.

It belongs to the PPP phosphatase family. PP-1 subfamily. Mn(2+) is required as a cofactor.

The catalysed reaction is O-phospho-L-seryl-[protein] + H2O = L-seryl-[protein] + phosphate. It catalyses the reaction O-phospho-L-threonyl-[protein] + H2O = L-threonyl-[protein] + phosphate. Its activity is regulated as follows. Inhibited by cadmium, copper, zinc when added activity but with less efficiency. Functionally, can hydrolyze phosphorylated Ser-, Thr- or Tyr-substrates in vitro. The natural substrate is unknown. The chain is Serine/threonine-protein phosphatase 2 (pphB) from Salmonella typhimurium (strain LT2 / SGSC1412 / ATCC 700720).